The chain runs to 452 residues: UDP-glycosyltransferase 79B11 (452 aa).

Residues Ser-260, 319-325 (VQQPSWQ), 340-348 (HCGFGSMWE), and 362-365 (LNDQ) each bind UDP-alpha-D-glucose.

It belongs to the UDP-glycosyltransferase family.

The polypeptide is UDP-glycosyltransferase 79B11 (UGT79B11) (Arabidopsis thaliana (Mouse-ear cress)).